The chain runs to 413 residues: Arginine biosynthesis bifunctional protein ArgJ 1 (413 aa).

Substrate contacts are provided by Thr-154, Lys-180, Thr-191, Glu-277, Asn-408, and Thr-413. The Nucleophile role is filled by Thr-191.

The protein belongs to the ArgJ family. In terms of assembly, heterotetramer of two alpha and two beta chains.

It localises to the cytoplasm. The catalysed reaction is N(2)-acetyl-L-ornithine + L-glutamate = N-acetyl-L-glutamate + L-ornithine. The enzyme catalyses L-glutamate + acetyl-CoA = N-acetyl-L-glutamate + CoA + H(+). The protein operates within amino-acid biosynthesis; L-arginine biosynthesis; L-ornithine and N-acetyl-L-glutamate from L-glutamate and N(2)-acetyl-L-ornithine (cyclic): step 1/1. It participates in amino-acid biosynthesis; L-arginine biosynthesis; N(2)-acetyl-L-ornithine from L-glutamate: step 1/4. Functionally, catalyzes two activities which are involved in the cyclic version of arginine biosynthesis: the synthesis of N-acetylglutamate from glutamate and acetyl-CoA as the acetyl donor, and of ornithine by transacetylation between N(2)-acetylornithine and glutamate. The chain is Arginine biosynthesis bifunctional protein ArgJ 1 from Nostoc sp. (strain PCC 7120 / SAG 25.82 / UTEX 2576).